The primary structure comprises 139 residues: MTATEIQKVLPHRYPMLMVDRVLELVSGERILAQKNVTINEEFFQGHFPGNPVMPGVLIVEALAQAGAIALLKMDRFAGKTPYFGGVDKVKFRRMVRPGDTLTLNVTLDKLKDNIGSAHALATVDGEKACSADLLFLIK.

H47 is an active-site residue.

Belongs to the thioester dehydratase family. FabZ subfamily.

It localises to the cytoplasm. The enzyme catalyses a (3R)-hydroxyacyl-[ACP] = a (2E)-enoyl-[ACP] + H2O. Functionally, involved in unsaturated fatty acids biosynthesis. Catalyzes the dehydration of short chain beta-hydroxyacyl-ACPs and long chain saturated and unsaturated beta-hydroxyacyl-ACPs. This is 3-hydroxyacyl-[acyl-carrier-protein] dehydratase FabZ from Oenococcus oeni (strain ATCC BAA-331 / PSU-1).